The sequence spans 440 residues: Probable carboxypeptidase AFUB_072730 (440 aa).

The signal sequence occupies residues 1–16; that stretch reads MKPLTSLLLSAALSAA. Residues Asn-87 and Asn-149 are each glycosylated (N-linked (GlcNAc...) asparagine). Asp-165 serves as a coordination point for Zn(2+). Glu-197 acts as the Proton acceptor in catalysis. Glu-198 is a Zn(2+) binding site. Asn-353 and Asn-372 each carry an N-linked (GlcNAc...) asparagine glycan.

This sequence belongs to the peptidase M20A family. Zn(2+) is required as a cofactor.

It is found in the secreted. The sequence is that of Probable carboxypeptidase AFUB_072730 from Aspergillus fumigatus (strain CBS 144.89 / FGSC A1163 / CEA10) (Neosartorya fumigata).